Consider the following 320-residue polypeptide: o-succinylbenzoate synthase (320 aa).

The Proton donor role is filled by K133. Residues D161, E190, and D213 each coordinate Mg(2+). K235 serves as the catalytic Proton acceptor.

The protein belongs to the mandelate racemase/muconate lactonizing enzyme family. MenC type 1 subfamily. A divalent metal cation is required as a cofactor.

It carries out the reaction (1R,6R)-6-hydroxy-2-succinyl-cyclohexa-2,4-diene-1-carboxylate = 2-succinylbenzoate + H2O. Its pathway is quinol/quinone metabolism; 1,4-dihydroxy-2-naphthoate biosynthesis; 1,4-dihydroxy-2-naphthoate from chorismate: step 4/7. It participates in quinol/quinone metabolism; menaquinone biosynthesis. Its function is as follows. Converts 2-succinyl-6-hydroxy-2,4-cyclohexadiene-1-carboxylate (SHCHC) to 2-succinylbenzoate (OSB). In Salmonella dublin (strain CT_02021853), this protein is o-succinylbenzoate synthase.